A 127-amino-acid polypeptide reads, in one-letter code: Aspartate 1-decarboxylase (127 aa).

The Schiff-base intermediate with substrate; via pyruvic acid role is filled by S25. A Pyruvic acid (Ser) modification is found at S25. T57 is a substrate binding site. The active-site Proton donor is Y58. 73–75 lines the substrate pocket; the sequence is GAA.

This sequence belongs to the PanD family. Heterooctamer of four alpha and four beta subunits. Pyruvate serves as cofactor. Post-translationally, is synthesized initially as an inactive proenzyme, which is activated by self-cleavage at a specific serine bond to produce a beta-subunit with a hydroxyl group at its C-terminus and an alpha-subunit with a pyruvoyl group at its N-terminus.

Its subcellular location is the cytoplasm. It catalyses the reaction L-aspartate + H(+) = beta-alanine + CO2. Its pathway is cofactor biosynthesis; (R)-pantothenate biosynthesis; beta-alanine from L-aspartate: step 1/1. Functionally, catalyzes the pyruvoyl-dependent decarboxylation of aspartate to produce beta-alanine. This Neisseria meningitidis serogroup A / serotype 4A (strain DSM 15465 / Z2491) protein is Aspartate 1-decarboxylase.